Consider the following 387-residue polypeptide: Chorismate synthase (387 aa).

NADP(+) contacts are provided by R39 and R45. FMN contacts are provided by residues R130–S132, N251–A252, G295, K310–T314, and R336.

The protein belongs to the chorismate synthase family. Homotetramer. FMNH2 serves as cofactor.

The catalysed reaction is 5-O-(1-carboxyvinyl)-3-phosphoshikimate = chorismate + phosphate. It functions in the pathway metabolic intermediate biosynthesis; chorismate biosynthesis; chorismate from D-erythrose 4-phosphate and phosphoenolpyruvate: step 7/7. In terms of biological role, catalyzes the anti-1,4-elimination of the C-3 phosphate and the C-6 proR hydrogen from 5-enolpyruvylshikimate-3-phosphate (EPSP) to yield chorismate, which is the branch point compound that serves as the starting substrate for the three terminal pathways of aromatic amino acid biosynthesis. This reaction introduces a second double bond into the aromatic ring system. This is Chorismate synthase from Exiguobacterium sp. (strain ATCC BAA-1283 / AT1b).